The chain runs to 290 residues: Appressoria-specific virulence factor GAS2 (290 aa).

A signal peptide spans 1–19; it reads MKYTSAILISAFAATNVFA. Asn-99 carries an N-linked (GlcNAc...) asparagine glycan. The interval 121–140 is disordered; the sequence is LPRAGGGTSTPKGTEETGVK.

It localises to the cytoplasm. Functionally, appressoria-specific virulence factor required for appressorial penetration in host and lesion development. The protein is Appressoria-specific virulence factor GAS2 of Pyricularia oryzae (strain 70-15 / ATCC MYA-4617 / FGSC 8958) (Rice blast fungus).